A 504-amino-acid chain; its full sequence is ATP synthase subunit alpha (504 aa).

169-176 (GDRQTGKT) serves as a coordination point for ATP.

The protein belongs to the ATPase alpha/beta chains family. F-type ATPases have 2 components, CF(1) - the catalytic core - and CF(0) - the membrane proton channel. CF(1) has five subunits: alpha(3), beta(3), gamma(1), delta(1), epsilon(1). CF(0) has three main subunits: a(1), b(2) and c(9-12). The alpha and beta chains form an alternating ring which encloses part of the gamma chain. CF(1) is attached to CF(0) by a central stalk formed by the gamma and epsilon chains, while a peripheral stalk is formed by the delta and b chains.

The protein localises to the cell membrane. The enzyme catalyses ATP + H2O + 4 H(+)(in) = ADP + phosphate + 5 H(+)(out). Produces ATP from ADP in the presence of a proton gradient across the membrane. The alpha chain is a regulatory subunit. This chain is ATP synthase subunit alpha, found in Clostridium botulinum (strain Langeland / NCTC 10281 / Type F).